The chain runs to 212 residues: Putative tyrosine-protein phosphatase OCA1 (212 aa).

Positions Met1–Ile27 are disordered. A compositionally biased stretch (basic and acidic residues) spans Asn12–Pro22. Positions Asn40–Pro208 constitute a Tyrosine-protein phosphatase domain. Cys146 functions as the Phosphocysteine intermediate in the catalytic mechanism.

The protein belongs to the protein-tyrosine phosphatase family.

Its subcellular location is the cytoplasm. The enzyme catalyses O-phospho-L-tyrosyl-[protein] + H2O = L-tyrosyl-[protein] + phosphate. Its function is as follows. Putative tyrosine-protein phosphatase required for protection against superoxide stress. The sequence is that of Putative tyrosine-protein phosphatase OCA1 (OCA1) from Scheffersomyces stipitis (strain ATCC 58785 / CBS 6054 / NBRC 10063 / NRRL Y-11545) (Yeast).